The sequence spans 846 residues: Penicillin G acylase (846 aa).

A signal peptide spans 1–26 (MKNRNRMIVNCVTASLMYYWSLPALA). Glu178 serves as a coordination point for Ca(2+). A propeptide spans 236 to 289 (ALLPRYDLPAPMLDRPAKGADGALLALTAGKNRETIAAQFAQGGANGLAGYPTT) (spacer peptide). The Nucleophile role is filled by Ser290. Residues Asp362, Val364, Asp365, Pro494, and Asp541 each contribute to the Ca(2+) site.

This sequence belongs to the peptidase S45 family. Heterodimer of an alpha subunit and a beta subunit processed from the same precursor. It depends on Ca(2+) as a cofactor.

The protein localises to the periplasm. The catalysed reaction is a penicillin + H2O = 6-aminopenicillanate + a carboxylate. This is Penicillin G acylase (pac) from Escherichia coli.